The primary structure comprises 143 residues: Small ribosomal subunit protein uS11c (143 aa).

The protein belongs to the universal ribosomal protein uS11 family. As to quaternary structure, part of the 30S ribosomal subunit.

It is found in the plastid. The protein localises to the chloroplast. In Oryza nivara (Indian wild rice), this protein is Small ribosomal subunit protein uS11c.